Reading from the N-terminus, the 259-residue chain is Ribonuclease HII (259 aa).

Residues 72-259 enclose the RNase H type-2 domain; the sequence is SYIAGIDEVG…PIKDMIKNKL (188 aa). Residues Asp78, Glu79, and Asp170 each coordinate a divalent metal cation.

Belongs to the RNase HII family. Mn(2+) is required as a cofactor. It depends on Mg(2+) as a cofactor.

Its subcellular location is the cytoplasm. The enzyme catalyses Endonucleolytic cleavage to 5'-phosphomonoester.. Functionally, endonuclease that specifically degrades the RNA of RNA-DNA hybrids. This chain is Ribonuclease HII, found in Bacillus cytotoxicus (strain DSM 22905 / CIP 110041 / 391-98 / NVH 391-98).